The chain runs to 436 residues: Methylenetetrahydrofolate--tRNA-(uracil-5-)-methyltransferase TrmFO (436 aa).

Position 11 to 16 (11 to 16 (GAGLAG)) interacts with FAD.

Belongs to the MnmG family. TrmFO subfamily. Requires FAD as cofactor.

Its subcellular location is the cytoplasm. The catalysed reaction is uridine(54) in tRNA + (6R)-5,10-methylene-5,6,7,8-tetrahydrofolate + NADH + H(+) = 5-methyluridine(54) in tRNA + (6S)-5,6,7,8-tetrahydrofolate + NAD(+). It catalyses the reaction uridine(54) in tRNA + (6R)-5,10-methylene-5,6,7,8-tetrahydrofolate + NADPH + H(+) = 5-methyluridine(54) in tRNA + (6S)-5,6,7,8-tetrahydrofolate + NADP(+). In terms of biological role, catalyzes the folate-dependent formation of 5-methyl-uridine at position 54 (M-5-U54) in all tRNAs. This is Methylenetetrahydrofolate--tRNA-(uracil-5-)-methyltransferase TrmFO from Shouchella clausii (strain KSM-K16) (Alkalihalobacillus clausii).